The chain runs to 341 residues: Eukaryotic translation initiation factor 3 subunit I (341 aa).

WD repeat units follow at residues 8-49, 50-91, 145-184, 189-228, and 286-325; these read GHER…GTYH, GHQG…HTWE, CDESKATVAGWSYLAKYIIAGHEDGSVSQYDAKNGDQLHS, DMGSEIRDLQWSQDRTYFITASKDKTAKLVTARDLEVLKT, and GHFGPLNYVAAEPNGKGYASGGEDGYVRVHQFDKGYFDFM.

The protein belongs to the eIF-3 subunit I family. In terms of assembly, component of the eukaryotic translation initiation factor 3 (eIF-3) complex.

It is found in the cytoplasm. Its function is as follows. Component of the eukaryotic translation initiation factor 3 (eIF-3) complex, which is involved in protein synthesis of a specialized repertoire of mRNAs and, together with other initiation factors, stimulates binding of mRNA and methionyl-tRNAi to the 40S ribosome. The eIF-3 complex specifically targets and initiates translation of a subset of mRNAs involved in cell proliferation. In Pyricularia oryzae (strain 70-15 / ATCC MYA-4617 / FGSC 8958) (Rice blast fungus), this protein is Eukaryotic translation initiation factor 3 subunit I.